Consider the following 404-residue polypeptide: Acetate kinase (404 aa).

Asn8 contacts Mg(2+). Lys15 serves as a coordination point for ATP. Arg92 serves as a coordination point for substrate. Asp149 acts as the Proton donor/acceptor in catalysis. ATP-binding positions include 207-211 (HLGSG), 282-284 (DMR), and 327-331 (GIGEN). Residue Glu378 coordinates Mg(2+).

This sequence belongs to the acetokinase family. Homodimer. Requires Mg(2+) as cofactor. The cofactor is Mn(2+).

The protein resides in the cytoplasm. It carries out the reaction acetate + ATP = acetyl phosphate + ADP. Its pathway is metabolic intermediate biosynthesis; acetyl-CoA biosynthesis; acetyl-CoA from acetate: step 1/2. Functionally, catalyzes the formation of acetyl phosphate from acetate and ATP. Can also catalyze the reverse reaction. The polypeptide is Acetate kinase (Nitrobacter hamburgensis (strain DSM 10229 / NCIMB 13809 / X14)).